The primary structure comprises 380 residues: Phospho-N-acetylmuramoyl-pentapeptide-transferase (380 aa).

Transmembrane regions (helical) follow at residues 25 to 45, 70 to 90, 98 to 118, 142 to 162, 173 to 193, 209 to 229, 245 to 265, 272 to 294, and 357 to 377; these read RAAA…PAII, TTPT…VLLW, VLLA…DDYL, VLCG…TLPG, VLVV…VTFI, GLSS…AYVL, GAGE…GFLW, QVFM…AILL, and QVVV…LSTL.

Belongs to the glycosyltransferase 4 family. MraY subfamily. It depends on Mg(2+) as a cofactor.

It is found in the cell inner membrane. The catalysed reaction is UDP-N-acetyl-alpha-D-muramoyl-L-alanyl-gamma-D-glutamyl-meso-2,6-diaminopimeloyl-D-alanyl-D-alanine + di-trans,octa-cis-undecaprenyl phosphate = di-trans,octa-cis-undecaprenyl diphospho-N-acetyl-alpha-D-muramoyl-L-alanyl-D-glutamyl-meso-2,6-diaminopimeloyl-D-alanyl-D-alanine + UMP. It participates in cell wall biogenesis; peptidoglycan biosynthesis. Catalyzes the initial step of the lipid cycle reactions in the biosynthesis of the cell wall peptidoglycan: transfers peptidoglycan precursor phospho-MurNAc-pentapeptide from UDP-MurNAc-pentapeptide onto the lipid carrier undecaprenyl phosphate, yielding undecaprenyl-pyrophosphoryl-MurNAc-pentapeptide, known as lipid I. In Gemmatimonas aurantiaca (strain DSM 14586 / JCM 11422 / NBRC 100505 / T-27), this protein is Phospho-N-acetylmuramoyl-pentapeptide-transferase.